Reading from the N-terminus, the 481-residue chain is Rho GTPase-activating protein 15 (481 aa).

5 positions are modified to phosphoserine: S51, S111, S204, S207, and S249. One can recognise a PH domain in the interval 87–197 (MVEKEGYLQK…WFQAIKNAID (111 aa)). In terms of domain architecture, Rho-GAP spans 287-476 (SHLHTVCERE…FMLTEYDKIF (190 aa)).

Its subcellular location is the cytoplasm. The protein resides in the membrane. GTPase activator for the Rho-type GTPases by converting them to an inactive GDP-bound state. Has activity toward RAC1. Overexpression results in an increase in actin stress fibers and cell contraction. In Mus musculus (Mouse), this protein is Rho GTPase-activating protein 15 (Arhgap15).